The primary structure comprises 72 residues: Disintegrin cotiarin (72 aa).

The 72-residue stretch at 1-72 folds into the Disintegrin domain; that stretch reads EAGEECDCGA…SADCPRNRFH (72 aa). 6 disulfides stabilise this stretch: Cys-6-Cys-21, Cys-8-Cys-16, Cys-15-Cys-38, Cys-29-Cys-35, Cys-34-Cys-59, and Cys-47-Cys-66. The Cell attachment site motif lies at 51-53; sequence RGD. The segment at 51 to 72 is disordered; sequence RGDNPDDRCTGQSADCPRNRFH.

This sequence belongs to the venom metalloproteinase (M12B) family. P-II subfamily. P-IIa sub-subfamily. Monomer. As to expression, expressed by the venom gland.

It is found in the secreted. Inhibits fibrinogen interaction with platelets. Acts by binding to alpha-IIb/beta-3 (ITGA2B/ITGB3) on the platelet surface and inhibits aggregation induced by ADP, thrombin, platelet-activating factor and collagen. The polypeptide is Disintegrin cotiarin (Bothrops cotiara (Cotiara)).